Reading from the N-terminus, the 113-residue chain is MEAKATARYVRISPRKAREVIDMIRGKNIEEALGILQLTPKGATKPIEKVVKSAQANAENNFEMNPDSLYISECYVDEGPTLKRFRPRAMGRATPINKKTSHLTVVVKEQKEG.

Belongs to the universal ribosomal protein uL22 family. Part of the 50S ribosomal subunit.

Its function is as follows. This protein binds specifically to 23S rRNA; its binding is stimulated by other ribosomal proteins, e.g. L4, L17, and L20. It is important during the early stages of 50S assembly. It makes multiple contacts with different domains of the 23S rRNA in the assembled 50S subunit and ribosome. In terms of biological role, the globular domain of the protein is located near the polypeptide exit tunnel on the outside of the subunit, while an extended beta-hairpin is found that lines the wall of the exit tunnel in the center of the 70S ribosome. This Natranaerobius thermophilus (strain ATCC BAA-1301 / DSM 18059 / JW/NM-WN-LF) protein is Large ribosomal subunit protein uL22.